A 247-amino-acid polypeptide reads, in one-letter code: uncharacterized protein (247 aa).

Residues 225–247 (LASAPVPPSGSGNSGHRRANLGL) are disordered.

This is an uncharacterized protein from Methanocaldococcus jannaschii (strain ATCC 43067 / DSM 2661 / JAL-1 / JCM 10045 / NBRC 100440) (Methanococcus jannaschii).